Consider the following 619-residue polypeptide: Kinesin light chain 4 (619 aa).

Ser-2 carries the post-translational modification N-acetylserine. The stretch at 55 to 88 (QQGGHEEGLVHEKARQLRRSMENIELGLSEAQVM) is one TPR 1 repeat. The stretch at 65–155 (HEKARQLRRS…HLEFLRQLRQ (91 aa)) forms a coiled coil. The segment covering 156 to 175 (YDEDGHGMEEKEGEATKDSL) has biased composition (basic and acidic residues). Positions 156 to 199 (YDEDGHGMEEKEGEATKDSLDDLFPNEEEEDSGNDLSRGQGAAA) are disordered. Ser-174 carries the post-translational modification Phosphoserine. Residues 179–188 (FPNEEEEDSG) are compositionally biased toward acidic residues. TPR repeat units follow at residues 211–244 (LRTLHNLVIQYAAQGRYEVAVPLCKQALEDLERT), 253–286 (ATMLNILALVYRDQNKYKEAAHLLNDALSIREST), 295–328 (AATLNNLAVLYGKRGKYKEAEPLCQRALEIREKV), 337–370 (AKQLNNLALLCQNQGKYEAVERYYQRALAIYESQ), and 379–412 (ARTKNNLASCYLKQGKYSEAEALYKEILTCAHVQ). Ser-460 carries the post-translational modification Phosphoserine. Residues 464–497 (NTTLKNLGALYRRQGKLEAAETLEECALRSRKQG) form a TPR 7 repeat. A phosphoserine mark is found at Ser-565, Ser-566, and Ser-590. Positions 571–619 (RKLQGTEPRPSSSSMKRAASLNYLNQPNAAPLQVSRGLSASTVDLSSSS) are disordered. Positions 609-619 (SASTVDLSSSS) are enriched in low complexity. A Phosphothreonine modification is found at Thr-612.

The protein belongs to the kinesin light chain family. In terms of assembly, oligomeric complex composed of two heavy chains and two light chains.

The protein localises to the cytoplasm. Its subcellular location is the cytoskeleton. Functionally, kinesin is a microtubule-associated force-producing protein that may play a role in organelle transport. The light chain may function in coupling of cargo to the heavy chain or in the modulation of its ATPase activity. This Mus musculus (Mouse) protein is Kinesin light chain 4 (Klc4).